The following is a 170-amino-acid chain: Shikimate kinase (170 aa).

15-20 is a binding site for ATP; that stretch reads GAGKTT. Position 19 (threonine 19) interacts with Mg(2+). 3 residues coordinate substrate: aspartate 37, arginine 61, and glycine 83. ATP is bound at residue arginine 121. Arginine 140 contacts substrate.

Belongs to the shikimate kinase family. As to quaternary structure, monomer. Requires Mg(2+) as cofactor.

The protein localises to the cytoplasm. It catalyses the reaction shikimate + ATP = 3-phosphoshikimate + ADP + H(+). It functions in the pathway metabolic intermediate biosynthesis; chorismate biosynthesis; chorismate from D-erythrose 4-phosphate and phosphoenolpyruvate: step 5/7. Functionally, catalyzes the specific phosphorylation of the 3-hydroxyl group of shikimic acid using ATP as a cosubstrate. The protein is Shikimate kinase of Neisseria gonorrhoeae (strain ATCC 700825 / FA 1090).